Reading from the N-terminus, the 296-residue chain is Probable endonuclease 4 (296 aa).

Zn(2+)-binding residues include histidine 68, histidine 109, glutamate 144, aspartate 178, histidine 181, histidine 213, aspartate 226, histidine 228, and glutamate 258.

This sequence belongs to the AP endonuclease 2 family. It depends on Zn(2+) as a cofactor.

The enzyme catalyses Endonucleolytic cleavage to 5'-phosphooligonucleotide end-products.. Its function is as follows. Endonuclease IV plays a role in DNA repair. It cleaves phosphodiester bonds at apurinic or apyrimidinic (AP) sites, generating a 3'-hydroxyl group and a 5'-terminal sugar phosphate. The polypeptide is Probable endonuclease 4 (Staphylococcus epidermidis (strain ATCC 35984 / DSM 28319 / BCRC 17069 / CCUG 31568 / BM 3577 / RP62A)).